We begin with the raw amino-acid sequence, 734 residues long: MFGRVLGRETVQYFEALRREVQARRGAKNRAAEAQNGGEDDAKTAFLNFAIPTPQRHQTVVPGVGTLHDCCETAQIFASVARRLLFRSLSKWQSGEARERLDPASVEAYVDPKVRQALKTISFVEYSDDEARSCRNAYYSIMNTFDALRSSDAFHQVASFVARFSRLVDTSFNGADLDGDGQQASKRARVDVPTYGKQRGTLELFQKMILMHATYFIAAVILGDHADRIGAFLKMVFNTPEFSDATIRHFRQRATVFLVPRRHGKTWFLVPLIALALATFKGIKIGYTAHIRKATEPVFDEIGARLRQWFGNSPVDHVKGENISFSFPDGSKSTIVFASSHNTNGIRGQDFNLLFVDEANFIRPEAVQTIIGFLNQTNCKIIFVSSTNTGKASTSFLYNLKGAADDLLNVVTYICDEHMERVKAHTNATACSCYILNKPVFITMDGAMRNTAELFLPDSFMQEIIGGGNVSGAHRDEPVFTKTAQDRFLLYRPSTVANQDIMSSDLYVYVDPAFTTNAMASGTGVAVVGRYRSNWVVFGMEHFFLSALTGSSAELIARCVAQCLAQVFAIHKRPFDSVRVAVEGNSSQDAAVAIATNIQLELNTLRRADVVPMPGAVLFYHCTPHGSSVAYPFFLLQKQKTGAFDHFIKAFNSGSVLASQELVSNTVRLQTDPVEYLLTQMKNLTEVVTGTSETRVFTGKRNGASDDMLVALVMAVYLSSLPPTSDAFSSLPAQ.

The Nuclear localization signal motif lies at 184–190 (ASKRARV). A Walker A motif motif is present at residues 259 to 266 (VPRRHGKT). A Walker B motif motif is present at residues 353 to 358 (LLFVDE). The active-site For ATPase activity is E358. Residues D511, E583, and D707 each act as for nuclease activity in the active site.

It belongs to the herpesviridae TRM3 protein family. In terms of assembly, interacts with the terminase subunits TRM1 and TRM2. Interacts with portal protein.

The protein localises to the host nucleus. Component of the molecular motor that translocates viral genomic DNA in empty capsid during DNA packaging. Forms a tripartite terminase complex together with TRM1 and TRM2 in the host cytoplasm. Once the complex reaches the host nucleus, it interacts with the capsid portal vertex. This portal forms a ring in which genomic DNA is translocated into the capsid. TRM3 carries an RNase H-like nuclease activity that plays an important role for the cleavage of concatemeric viral DNA into unit length genomes. The protein is Tripartite terminase subunit 3 of Equus caballus (Horse).